The chain runs to 101 residues: Growth-regulated alpha protein (101 aa).

An N-terminal signal peptide occupies residues Met-1 to Gly-28. 2 disulfide bridges follow: Cys-37-Cys-63 and Cys-39-Cys-79.

It belongs to the intercrine alpha (chemokine CxC) family.

The protein localises to the secreted. In terms of biological role, has chemotactic activity for neutrophils. In Cricetulus griseus (Chinese hamster), this protein is Growth-regulated alpha protein (CXCL1).